The sequence spans 147 residues: MNIGQASKVVSGVSSKMIRYYEQIGLIRPALRTASSYRVYGDNDIHTLQFVRRARDLGFSVEQIKDLLALWRDRSRNSANVKAVALEHIAELERKIAAIEEMTTTLKHLASHCHGDDRPECPIIEEIANAADGKKPRANARFGLSAL.

Residues 1–70 (MNIGQASKVV…VEQIKDLLAL (70 aa)) enclose the HTH merR-type domain. Residues 3–22 (IGQASKVVSGVSSKMIRYYE) constitute a DNA-binding region (H-T-H motif).

It is found in the cytoplasm. Transcriptional regulator involved in acid tolerance. Binds copper. The sequence is that of Heavy metal-dependent transcription regulator 1 (hmrR1) from Rhizobium meliloti (strain 1021) (Ensifer meliloti).